A 367-amino-acid chain; its full sequence is Chorismate synthase (367 aa).

Residue Arg-48 participates in NADP(+) binding. Residues 125 to 127 (RSS), 243 to 244 (NA), Gly-283, 298 to 302 (KPTSS), and Arg-324 each bind FMN.

This sequence belongs to the chorismate synthase family. In terms of assembly, homotetramer. The cofactor is FMNH2.

The enzyme catalyses 5-O-(1-carboxyvinyl)-3-phosphoshikimate = chorismate + phosphate. The protein operates within metabolic intermediate biosynthesis; chorismate biosynthesis; chorismate from D-erythrose 4-phosphate and phosphoenolpyruvate: step 7/7. Functionally, catalyzes the anti-1,4-elimination of the C-3 phosphate and the C-6 proR hydrogen from 5-enolpyruvylshikimate-3-phosphate (EPSP) to yield chorismate, which is the branch point compound that serves as the starting substrate for the three terminal pathways of aromatic amino acid biosynthesis. This reaction introduces a second double bond into the aromatic ring system. The polypeptide is Chorismate synthase (Psychrobacter sp. (strain PRwf-1)).